The following is a 115-amino-acid chain: MSMDNIVRIIEKSQLKEVPEFRPGDTVRVHVKVKEGDKERIQAYEGVVISIRGSGISKTFTVRRISAGGIGVERIFPLYAPTIDKIEVVRRGRVRRAKLYYLRDVKGKVKIKERK.

Belongs to the bacterial ribosomal protein bL19 family.

Its function is as follows. This protein is located at the 30S-50S ribosomal subunit interface and may play a role in the structure and function of the aminoacyl-tRNA binding site. The chain is Large ribosomal subunit protein bL19 from Fervidobacterium nodosum (strain ATCC 35602 / DSM 5306 / Rt17-B1).